Reading from the N-terminus, the 786-residue chain is Protein translocase subunit SecA 1 (786 aa).

ATP is bound by residues glutamine 85, 103–107 (GEGKT), and aspartate 491.

It belongs to the SecA family. As to quaternary structure, monomer and homodimer. Part of the essential Sec protein translocation apparatus which comprises SecA, SecYEG and auxiliary proteins SecDF. Other proteins may also be involved.

It is found in the cell membrane. It localises to the cytoplasm. The enzyme catalyses ATP + H2O + cellular proteinSide 1 = ADP + phosphate + cellular proteinSide 2.. In terms of biological role, part of the Sec protein translocase complex. Interacts with the SecYEG preprotein conducting channel. Has a central role in coupling the hydrolysis of ATP to the transfer of proteins into and across the cell membrane, serving as an ATP-driven molecular motor driving the stepwise translocation of polypeptide chains across the membrane. The chain is Protein translocase subunit SecA 1 from Pediococcus pentosaceus (strain ATCC 25745 / CCUG 21536 / LMG 10740 / 183-1w).